The primary structure comprises 194 residues: Fe/S biogenesis protein NfuA (194 aa).

[4Fe-4S] cluster contacts are provided by C151 and C154.

The protein belongs to the NfuA family. Homodimer. It depends on [4Fe-4S] cluster as a cofactor.

Involved in iron-sulfur cluster biogenesis. Binds a 4Fe-4S cluster, can transfer this cluster to apoproteins, and thereby intervenes in the maturation of Fe/S proteins. Could also act as a scaffold/chaperone for damaged Fe/S proteins. This Aliivibrio fischeri (strain ATCC 700601 / ES114) (Vibrio fischeri) protein is Fe/S biogenesis protein NfuA.